Here is a 40-residue protein sequence, read N- to C-terminus: Accessory gland-specific peptide 57Db (40 aa).

The first 17 residues, 1–17 (MKITSALVLLFAGVAFA), serve as a signal peptide directing secretion.

In terms of tissue distribution, lumen fluid of male accessory glands, becomes seminal fluid.

It is found in the secreted. Its function is as follows. Transferred from male to female during mating and may affect egglaying and behavior after mating. The chain is Accessory gland-specific peptide 57Db (Mst57Db) from Drosophila melanogaster (Fruit fly).